The chain runs to 290 residues: uncharacterized protein (290 aa).

In terms of domain architecture, ABC transporter spans 2-238 (LKTENLSVGY…EIVNELYDLK (237 aa)). An ATP-binding site is contributed by 34-41 (GPNGAGKS).

The protein belongs to the ABC transporter superfamily.

This is an uncharacterized protein from Methanocaldococcus jannaschii (strain ATCC 43067 / DSM 2661 / JAL-1 / JCM 10045 / NBRC 100440) (Methanococcus jannaschii).